The following is a 486-amino-acid chain: MSSSSASQPSHDQLATKAQAWSALFSEPMSDLVKRYTSSVFFDKRLWQADIAGSLAHAEMLAAQGIISAQDHADIQKGMAQITQEIASGAFEWKLDLEDVHLNIEARLTQLVGDAGKRLHTGRSRNDQVATDVRLWLRGEIDLIEGLLSELQLSLVEVAEQNVEVILPGFTHLQVAQPVSFAHHLLAYVEMFARDAERMRDVRRRVNVLPLGSAALAGTTYPLDRERVAKTLGMEGVCQNSLDGVSDRDFAIEFTAAASLCMVHVSRLSEELIIWMSQNFGFIKIADRFTTGSSIMPQKKNPDVPELARGKTGRVVGHLMGLITLMKGQPLAYNKDNQEDKEPLFDTVDTLKDTLRIFAEMIGGQMNPATGCKDGGITVNAEAMRAAALKGYATATDLADYLVKKGLPFRDAHETVAHAVKAAVSHSVDLSELPLAVLQGFHPAIEKDVFDALSLQGSLNARNTLGGTAPAQVRTQLARHRARLSA.

It belongs to the lyase 1 family. Argininosuccinate lyase subfamily.

The protein localises to the cytoplasm. The enzyme catalyses 2-(N(omega)-L-arginino)succinate = fumarate + L-arginine. It functions in the pathway amino-acid biosynthesis; L-arginine biosynthesis; L-arginine from L-ornithine and carbamoyl phosphate: step 3/3. The polypeptide is Argininosuccinate lyase (Acidovorax ebreus (strain TPSY) (Diaphorobacter sp. (strain TPSY))).